A 347-amino-acid chain; its full sequence is Anthranilate phosphoribosyltransferase (347 aa).

5-phospho-alpha-D-ribose 1-diphosphate is bound by residues Gly88, 91–92, Thr96, 98–101, 116–124, and Ser128; these read GD, NIST, and KHGNRSVSS. Gly88 is an anthranilate binding site. Residue Ser100 coordinates Mg(2+). Asn119 contributes to the anthranilate binding site. Arg174 is an anthranilate binding site. The Mg(2+) site is built by Asp232 and Glu233.

This sequence belongs to the anthranilate phosphoribosyltransferase family. Homodimer. Mg(2+) serves as cofactor.

The enzyme catalyses N-(5-phospho-beta-D-ribosyl)anthranilate + diphosphate = 5-phospho-alpha-D-ribose 1-diphosphate + anthranilate. Its pathway is amino-acid biosynthesis; L-tryptophan biosynthesis; L-tryptophan from chorismate: step 2/5. Its function is as follows. Catalyzes the transfer of the phosphoribosyl group of 5-phosphorylribose-1-pyrophosphate (PRPP) to anthranilate to yield N-(5'-phosphoribosyl)-anthranilate (PRA). The protein is Anthranilate phosphoribosyltransferase of Shewanella sp. (strain MR-4).